The sequence spans 90 residues: Acylphosphatase (90 aa).

One can recognise an Acylphosphatase-like domain in the interval 5-90 (CERFIVKGHV…YKPFRGFKIL (86 aa)). Residues R20 and N38 contribute to the active site.

The protein belongs to the acylphosphatase family.

It carries out the reaction an acyl phosphate + H2O = a carboxylate + phosphate + H(+). This chain is Acylphosphatase (acyP), found in Vibrio parahaemolyticus serotype O3:K6 (strain RIMD 2210633).